Consider the following 146-residue polypeptide: Ribonuclease H (146 aa).

Positions 1–143 (MEKKVTIYTD…CDELARLAVR (143 aa)) constitute an RNase H type-1 domain. Residues aspartate 10, glutamate 48, aspartate 70, and aspartate 135 each contribute to the Mg(2+) site.

This sequence belongs to the RNase H family. As to quaternary structure, monomer. It depends on Mg(2+) as a cofactor.

It is found in the cytoplasm. It carries out the reaction Endonucleolytic cleavage to 5'-phosphomonoester.. In terms of biological role, endonuclease that specifically degrades the RNA of RNA-DNA hybrids. The protein is Ribonuclease H of Chlorobium phaeovibrioides (strain DSM 265 / 1930) (Prosthecochloris vibrioformis (strain DSM 265)).